The primary structure comprises 282 residues: Bis(5'-nucleosyl)-tetraphosphatase, symmetrical (282 aa).

This sequence belongs to the Ap4A hydrolase family.

It catalyses the reaction P(1),P(4)-bis(5'-adenosyl) tetraphosphate + H2O = 2 ADP + 2 H(+). Its function is as follows. Hydrolyzes diadenosine 5',5'''-P1,P4-tetraphosphate to yield ADP. The chain is Bis(5'-nucleosyl)-tetraphosphatase, symmetrical from Burkholderia pseudomallei (strain 668).